A 313-amino-acid chain; its full sequence is DNA-directed RNA polymerase subunit alpha (313 aa).

An alpha N-terminal domain (alpha-NTD) region spans residues Met1 to Lys229. The alpha C-terminal domain (alpha-CTD) stretch occupies residues Ile243–Lys313.

It belongs to the RNA polymerase alpha chain family. In terms of assembly, in plastids the minimal PEP RNA polymerase catalytic core is composed of four subunits: alpha, beta, beta', and beta''. When a (nuclear-encoded) sigma factor is associated with the core the holoenzyme is formed, which can initiate transcription.

The protein resides in the plastid. It localises to the chloroplast. The enzyme catalyses RNA(n) + a ribonucleoside 5'-triphosphate = RNA(n+1) + diphosphate. Its function is as follows. DNA-dependent RNA polymerase catalyzes the transcription of DNA into RNA using the four ribonucleoside triphosphates as substrates. This Thalassiosira pseudonana (Marine diatom) protein is DNA-directed RNA polymerase subunit alpha.